We begin with the raw amino-acid sequence, 256 residues long: Protein RKD4 (256 aa).

The 87-residue stretch at 130 to 216 (EKVTVKKKRN…MEEEVKNLEE (87 aa)) folds into the RWP-RK domain. Residues 190-224 (RKLKSLNSLIKNLKNVGMEEEVKNLEEHRFLIEQE) adopt a coiled-coil conformation.

It is found in the nucleus. In terms of biological role, putative transcription factor. The chain is Protein RKD4 (RKD4) from Arabidopsis thaliana (Mouse-ear cress).